The chain runs to 98 residues: Aspartyl/glutamyl-tRNA(Asn/Gln) amidotransferase subunit C (98 aa).

The protein belongs to the GatC family. In terms of assembly, heterotrimer of A, B and C subunits.

It carries out the reaction L-glutamyl-tRNA(Gln) + L-glutamine + ATP + H2O = L-glutaminyl-tRNA(Gln) + L-glutamate + ADP + phosphate + H(+). The catalysed reaction is L-aspartyl-tRNA(Asn) + L-glutamine + ATP + H2O = L-asparaginyl-tRNA(Asn) + L-glutamate + ADP + phosphate + 2 H(+). Functionally, allows the formation of correctly charged Asn-tRNA(Asn) or Gln-tRNA(Gln) through the transamidation of misacylated Asp-tRNA(Asn) or Glu-tRNA(Gln) in organisms which lack either or both of asparaginyl-tRNA or glutaminyl-tRNA synthetases. The reaction takes place in the presence of glutamine and ATP through an activated phospho-Asp-tRNA(Asn) or phospho-Glu-tRNA(Gln). The protein is Aspartyl/glutamyl-tRNA(Asn/Gln) amidotransferase subunit C of Microcystis aeruginosa (strain NIES-843 / IAM M-2473).